The primary structure comprises 245 residues: MPRYKLTIEYDGAPFCGWQLQPVLPSVQGALEAAALATCGEAVRVHGAGRTDAGVHALGQVAHLDIAKPFRADRLRDALNAHVRPYPVAVLSTEIVPDSFEARFSAIRRHYRYRIVNRRSNLALEIGKVWRVPKPLDTDAMHRAAQVLIGKHDFTTFRDTECQAASPEKTLDVLDVVRSGDCVDIITSARSYLHSQVRSMVGSLVWVGEGRWSADDLAAALAARRRSACGPVAPPDGLYLVKVDY.

The active-site Nucleophile is the aspartate 52. Residue tyrosine 111 coordinates substrate.

Belongs to the tRNA pseudouridine synthase TruA family. Homodimer.

It catalyses the reaction uridine(38/39/40) in tRNA = pseudouridine(38/39/40) in tRNA. Formation of pseudouridine at positions 38, 39 and 40 in the anticodon stem and loop of transfer RNAs. This is tRNA pseudouridine synthase A from Rhodopseudomonas palustris (strain BisB5).